The primary structure comprises 79 residues: Small ribosomal subunit protein bS18 (79 aa).

It belongs to the bacterial ribosomal protein bS18 family. As to quaternary structure, part of the 30S ribosomal subunit. Forms a tight heterodimer with protein bS6.

Its function is as follows. Binds as a heterodimer with protein bS6 to the central domain of the 16S rRNA, where it helps stabilize the platform of the 30S subunit. The chain is Small ribosomal subunit protein bS18 from Streptococcus pyogenes serotype M49 (strain NZ131).